The sequence spans 686 residues: MAKVNLIESPYSLLQLKGIGPKKIEVLQQLNIHTVEDLVLYLPTRYEDNTVIDLNQAEDQSNVTIEGQVYTAPVVAFFGRNNSKLTVHLMVNNIAVKCIFFNQPYLKKKIELNQTITVKGKWNRVKQEITGNRVFFNSQGTQTQENADVQLEPVYRIKEGIKQKQIRDQIRQALNDVTIHEWLTDELREKYKLETLDFTLNTLHHPKSKEDLLRARRTYAFTELFLFELRMQWLNRLEKSSDEAIEIDYGLDQVKSFIDRLPFELTEAQKSSVNEIFRDLKAPIRMHRLLQGDVGSGKTVVAAICMYALKTAGYQSALMVPTEILAEQHAESLMALFGDSMNVALLTGSVKGKKRKILLEQLENGTIDCLIGTHALIQDDVIFHNVGLVITDEQHRFGVNQRQLLREKGAMTNVLFMTATPIPRTLAISVFGEMDVSSIKQLPKGRKPIITTWAKHEQYDKVLMQMTSELKKGRQAYVICPLIESSEHLEDVQNVVALYESLQQYYGVSRVGLLHGKLSADEKDEVMQKFSNHEIDVLVSTTVVEVGVNVPNATFMMIYDADRFGLSTLHQLRGRVGRSDQQSYCVLIASPKTETGIERMTIMTQTTDGFELSERDLEMRGPGDFFGVKQSGLPDFLVANLVEDYRMLEVARDEAAELIQSGVFFENTYQHLRHFVEENLLHRSFD.

The tract at residues 50-149 is wedge domain; it reads TVIDLNQAED…GTQTQENADV (100 aa). The Helicase ATP-binding domain maps to 279–439; the sequence is DLKAPIRMHR…VFGEMDVSSI (161 aa). 292–299 contributes to the ATP binding site; it reads GDVGSGKT. The DEAH box motif lies at 392 to 395; the sequence is DEQH. A Helicase C-terminal domain is found at 462–618; the sequence is VLMQMTSELK…GFELSERDLE (157 aa).

The protein belongs to the helicase family. RecG subfamily. As to quaternary structure, monomer.

The catalysed reaction is Couples ATP hydrolysis with the unwinding of duplex DNA by translocating in the 3'-5' direction.. It carries out the reaction ATP + H2O = ADP + phosphate + H(+). Functionally, plays a critical role in recombination and DNA repair. Helps process Holliday junction intermediates to mature products by catalyzing branch migration. Has replication fork regression activity, unwinds stalled or blocked replication forks to make a HJ that can be resolved. Has a DNA unwinding activity characteristic of a DNA helicase with 3'-5' polarity. This chain is ATP-dependent DNA helicase RecG (recG), found in Staphylococcus aureus (strain MW2).